The chain runs to 23 residues: Paralytic peptide 1 (23 aa).

The cysteines at positions 7 and 19 are disulfide-linked.

This sequence belongs to the GBP/PSP1/paralytic peptide family. As to expression, hemolymph.

In terms of biological role, causes rapid, rigid paralysis when injected into Lepidopteran larvae. The physiological role may be to reduce hemolymph loss following injury and promote wound healing. This Spodoptera exigua (Beet armyworm) protein is Paralytic peptide 1.